The chain runs to 177 residues: Translationally-controlled tumor protein homolog (177 aa).

A TCTP domain is found at 1 to 177 (MIIYRDLFSG…IKQGLVVEKC (177 aa)).

Belongs to the TCTP family.

The protein resides in the cytoplasm. In terms of biological role, involved in calcium binding and microtubule stabilization. This is Translationally-controlled tumor protein homolog from Trichinella pseudospiralis (Parasitic roundworm).